Consider the following 842-residue polypeptide: Leucine--tRNA ligase (842 aa).

Residues 44–55 (PYPSANGLHVGH) carry the 'HIGH' region motif. The 'KMSKS' region signature appears at 619–623 (KMSKS). K622 lines the ATP pocket.

The protein belongs to the class-I aminoacyl-tRNA synthetase family.

It localises to the cytoplasm. It carries out the reaction tRNA(Leu) + L-leucine + ATP = L-leucyl-tRNA(Leu) + AMP + diphosphate. The chain is Leucine--tRNA ligase from Borrelia recurrentis (strain A1).